The sequence spans 20 residues: Unknown protein NF028 from 2D-PAGE (20 aa).

The protein is Unknown protein NF028 from 2D-PAGE of Naegleria fowleri (Brain eating amoeba).